A 534-amino-acid chain; its full sequence is CAP-Gly domain-containing linker protein 3 (534 aa).

Positions 1–16 (MTREDLPDSTPEESKL) are enriched in basic and acidic residues. The tract at residues 1 to 33 (MTREDLPDSTPEESKLPMEFQSPLLEKRRRPVV) is disordered. 3 ANK repeats span residues 107 to 148 (TDMT…LRSR), 150 to 173 (TNMN…LLKA), and 187 to 299 (NHGT…KAGT). The CAP-Gly 1 domain occupies 304–346 (GTTEFASGQWVGVELDEPDGKNDGSVGGIRYFICPPKQGIFAP). Positions 349–391 (KISKAPDQPPSSVTSTPRTPRVDFSRVTGKGRKEKKATHKKSL) are disordered. A compositionally biased stretch (low complexity) spans 358–367 (PSSVTSTPRT). Over residues 377–390 (GKGRKEKKATHKKS) the composition is skewed to basic residues. The CAP-Gly 2 domain maps to 423 to 465 (GKTDFAPGYWFGIELEKPTGKHDGSVFGVRYFTCSAKNGVFAP). The segment at 475–534 (PKDPQTDNNDMKKVHQVTMTQPKRNFTKVRTPKEIASENSMSRILFCCWFPWLLRAEMKS) is goLD.

Homodimer.

It localises to the cytoplasm. The protein resides in the golgi apparatus. Its subcellular location is the golgi stack. In terms of biological role, functions as a cytoplasmic linker protein. Involved in TGN-endosome dynamics. The sequence is that of CAP-Gly domain-containing linker protein 3 (clip3) from Xenopus laevis (African clawed frog).